The primary structure comprises 54 residues: Hemoglobin subunit omega (54 aa).

The 53-residue stretch at 2–54 folds into the Globin domain; sequence HWTAEEKQIILAIWAKIDIEEAGAAALSRLLVVYPWTQRYFKNFGNLSSPTAI.

This sequence belongs to the globin family.

Functionally, hemoglobin omega chain is an embryonic-type beta-type chain found in prenatal and neonatal marsupials. The sequence is that of Hemoglobin subunit omega from Notamacropus eugenii (Tammar wallaby).